The sequence spans 467 residues: ADP-dependent glucose/glucosamine kinase (467 aa).

Positions 10 to 467 (RLWKRLYVNA…FVSEFGMRKR (458 aa)) constitute an ADPK domain. D-glucose is bound by residues Asp42, Glu96, Gly120, 120–121 (GQ), His184, and Asp211. Glu279 contacts Mg(2+). Residue Asn305 coordinates ADP. Glu308 provides a ligand contact to Mg(2+). ADP contacts are provided by residues 352-353 (HT), Val440, and Gly450. Asp451 serves as a coordination point for D-glucose. Asp451 lines the Mg(2+) pocket. The Proton acceptor role is filled by Asp451.

The protein belongs to the ADP-dependent glucokinase family. In terms of assembly, monomer. It depends on Mg(2+) as a cofactor.

The protein resides in the cytoplasm. It catalyses the reaction D-glucose + ADP = D-glucose 6-phosphate + AMP + H(+). The catalysed reaction is D-glucosamine + ADP = D-glucosamine 6-phosphate + AMP + H(+). Its pathway is carbohydrate degradation; glycolysis. Functionally, catalyzes the ADP-dependent phosphorylation of D-glucose to D-glucose 6-phosphate and glucosamine to glucosamine 6-phosphate. Can also use CDP as the phosphoryl group donor and D-1,5-anhydroglucitol as the phosphoryl group acceptor. This is ADP-dependent glucose/glucosamine kinase from Thermococcus litoralis (strain ATCC 51850 / DSM 5473 / JCM 8560 / NS-C).